A 311-amino-acid chain; its full sequence is Ribosomal RNA small subunit methyltransferase H (311 aa).

S-adenosyl-L-methionine contacts are provided by residues 34–36 (GGY), Asp51, Phe75, Asp93, and Gln100.

It belongs to the methyltransferase superfamily. RsmH family.

Its subcellular location is the cytoplasm. The enzyme catalyses cytidine(1402) in 16S rRNA + S-adenosyl-L-methionine = N(4)-methylcytidine(1402) in 16S rRNA + S-adenosyl-L-homocysteine + H(+). Functionally, specifically methylates the N4 position of cytidine in position 1402 (C1402) of 16S rRNA. The chain is Ribosomal RNA small subunit methyltransferase H from Caulobacter vibrioides (strain ATCC 19089 / CIP 103742 / CB 15) (Caulobacter crescentus).